A 72-amino-acid polypeptide reads, in one-letter code: Translation initiation factor IF-1 (72 aa).

One can recognise an S1-like domain in the interval 1–72 (MAKEEAIEVE…TRGRIIFRER (72 aa)).

This sequence belongs to the IF-1 family. Component of the 30S ribosomal translation pre-initiation complex which assembles on the 30S ribosome in the order IF-2 and IF-3, IF-1 and N-formylmethionyl-tRNA(fMet); mRNA recruitment can occur at any time during PIC assembly.

It localises to the cytoplasm. Functionally, one of the essential components for the initiation of protein synthesis. Stabilizes the binding of IF-2 and IF-3 on the 30S subunit to which N-formylmethionyl-tRNA(fMet) subsequently binds. Helps modulate mRNA selection, yielding the 30S pre-initiation complex (PIC). Upon addition of the 50S ribosomal subunit IF-1, IF-2 and IF-3 are released leaving the mature 70S translation initiation complex. This Treponema denticola (strain ATCC 35405 / DSM 14222 / CIP 103919 / JCM 8153 / KCTC 15104) protein is Translation initiation factor IF-1.